The following is a 497-amino-acid chain: 3-octaprenyl-4-hydroxybenzoate carboxy-lyase (497 aa).

Residue Asn175 participates in Mn(2+) binding. Prenylated FMN contacts are provided by residues 178–180, 192–194, and 197–198; these read IYR, RWL, and RG. Glu241 lines the Mn(2+) pocket. Asp290 functions as the Proton donor in the catalytic mechanism.

The protein belongs to the UbiD family. As to quaternary structure, homohexamer. Requires prenylated FMN as cofactor. Mn(2+) is required as a cofactor.

It is found in the cell membrane. The catalysed reaction is a 4-hydroxy-3-(all-trans-polyprenyl)benzoate + H(+) = a 2-(all-trans-polyprenyl)phenol + CO2. Its pathway is cofactor biosynthesis; ubiquinone biosynthesis. Its function is as follows. Catalyzes the decarboxylation of 3-octaprenyl-4-hydroxy benzoate to 2-octaprenylphenol, an intermediate step in ubiquinone biosynthesis. This chain is 3-octaprenyl-4-hydroxybenzoate carboxy-lyase, found in Shigella flexneri.